Here is a 182-residue protein sequence, read N- to C-terminus: Lipoprotein signal peptidase (182 aa).

The next 3 helical transmembrane spans lie at 12–32 (VAVF…TKAW), 68–88 (ATWV…VAGV), and 91–111 (VSMK…GNLI). Catalysis depends on residues aspartate 127 and aspartate 140. A helical transmembrane segment spans residues 135–155 (VGNVADIYLVVAGVVLVILIL).

The protein belongs to the peptidase A8 family.

The protein resides in the cell membrane. It catalyses the reaction Release of signal peptides from bacterial membrane prolipoproteins. Hydrolyzes -Xaa-Yaa-Zaa-|-(S,diacylglyceryl)Cys-, in which Xaa is hydrophobic (preferably Leu), and Yaa (Ala or Ser) and Zaa (Gly or Ala) have small, neutral side chains.. The protein operates within protein modification; lipoprotein biosynthesis (signal peptide cleavage). This protein specifically catalyzes the removal of signal peptides from prolipoproteins. The protein is Lipoprotein signal peptidase of Bifidobacterium longum (strain DJO10A).